The primary structure comprises 415 residues: L-cysteine:1D-myo-inositol 2-amino-2-deoxy-alpha-D-glucopyranoside ligase (415 aa).

Position 43 (C43) interacts with Zn(2+). L-cysteinyl-5'-AMP-binding positions include 43–46 (CGIT), T58, and 81–83 (NIT). The short motif at 45-55 (ITPYDATHLGH) is the 'HIGH' region element. The 'ERGGDP' region motif lies at 187-192 (ERGGDP). W227 contributes to the L-cysteinyl-5'-AMP binding site. C231 is a Zn(2+) binding site. 249–251 (GSD) contributes to the L-cysteinyl-5'-AMP binding site. H256 contacts Zn(2+). I283 serves as a coordination point for L-cysteinyl-5'-AMP. Residues 289–293 (KMSKS) carry the 'KMSKS' region motif.

The protein belongs to the class-I aminoacyl-tRNA synthetase family. MshC subfamily. As to quaternary structure, monomer. Zn(2+) serves as cofactor.

It carries out the reaction 1D-myo-inositol 2-amino-2-deoxy-alpha-D-glucopyranoside + L-cysteine + ATP = 1D-myo-inositol 2-(L-cysteinylamino)-2-deoxy-alpha-D-glucopyranoside + AMP + diphosphate + H(+). In terms of biological role, catalyzes the ATP-dependent condensation of GlcN-Ins and L-cysteine to form L-Cys-GlcN-Ins. In Mycobacterium sp. (strain JLS), this protein is L-cysteine:1D-myo-inositol 2-amino-2-deoxy-alpha-D-glucopyranoside ligase.